A 261-amino-acid chain; its full sequence is 3-methyl-2-oxobutanoate hydroxymethyltransferase (261 aa).

Mg(2+) is bound by residues Asp-42 and Asp-81. Residues 42-43 (DS), Asp-81, and Lys-110 contribute to the 3-methyl-2-oxobutanoate site. Glu-112 is a Mg(2+) binding site. Glu-179 (proton acceptor) is an active-site residue.

The protein belongs to the PanB family. Homodecamer; pentamer of dimers. Requires Mg(2+) as cofactor.

It localises to the cytoplasm. It catalyses the reaction 3-methyl-2-oxobutanoate + (6R)-5,10-methylene-5,6,7,8-tetrahydrofolate + H2O = 2-dehydropantoate + (6S)-5,6,7,8-tetrahydrofolate. Its pathway is cofactor biosynthesis; (R)-pantothenate biosynthesis; (R)-pantoate from 3-methyl-2-oxobutanoate: step 1/2. In terms of biological role, catalyzes the reversible reaction in which hydroxymethyl group from 5,10-methylenetetrahydrofolate is transferred onto alpha-ketoisovalerate to form ketopantoate. This chain is 3-methyl-2-oxobutanoate hydroxymethyltransferase, found in Thermus thermophilus (strain ATCC BAA-163 / DSM 7039 / HB27).